Consider the following 478-residue polypeptide: Proline--tRNA ligase (478 aa).

The protein belongs to the class-II aminoacyl-tRNA synthetase family. ProS type 3 subfamily. Homodimer.

The protein resides in the cytoplasm. The enzyme catalyses tRNA(Pro) + L-proline + ATP = L-prolyl-tRNA(Pro) + AMP + diphosphate. Catalyzes the attachment of proline to tRNA(Pro) in a two-step reaction: proline is first activated by ATP to form Pro-AMP and then transferred to the acceptor end of tRNA(Pro). The polypeptide is Proline--tRNA ligase (Clostridium botulinum (strain Langeland / NCTC 10281 / Type F)).